The chain runs to 117 residues: Synaptobrevin homolog 1 (117 aa).

Positions 1-30 (MSSSTPFDPYALSEHDEERPQNVQSKSRTA) are disordered. Residues 1 to 94 (MSSSTPFDPY…MWYKDLKMKM (94 aa)) are Cytoplasmic-facing. In terms of domain architecture, v-SNARE coiled-coil homology spans 28 to 88 (RTAELQAEID…NRVRKAMWYK (61 aa)). Lysine 63 participates in a covalent cross-link: Glycyl lysine isopeptide (Lys-Gly) (interchain with G-Cter in ubiquitin). Cysteine 95 carries S-palmitoyl cysteine lipidation. Residues 95–111 (CLALVIIILLVVIIVPI) traverse the membrane as a helical; Anchor for type IV membrane protein segment. The Vesicular portion of the chain corresponds to 112 to 117 (AVHFSR).

Belongs to the synaptobrevin family. In terms of processing, palmitoylated by SWF1.

The protein localises to the endomembrane system. Its function is as follows. SNC1 and SNC2 are vesicle-targeting proteins essential for normal secretory traffic between the Golgi and the plasma membrane. They may also be involved in vesicle fusion. This Saccharomyces cerevisiae (strain ATCC 204508 / S288c) (Baker's yeast) protein is Synaptobrevin homolog 1 (SNC1).